The sequence spans 98 residues: snRNA-activating protein complex subunit 5 (98 aa).

Positions 75 to 98 are disordered; it reads ALELSTRSHVQEEEEEEEEEEEDS. Positions 86–98 are enriched in acidic residues; it reads EEEEEEEEEEEDS.

As to quaternary structure, part of the SNAPc complex composed of 5 subunits: SNAPC1, SNAPC2, SNAPC3, SNAPC4 and SNAPC5. SNAPC5 interacts with SNAPC4.

The protein resides in the nucleus. Its function is as follows. Part of the SNAPc complex required for the transcription of both RNA polymerase II and III small-nuclear RNA genes. Binds to the proximal sequence element (PSE), a non-TATA-box basal promoter element common to these 2 types of genes. Recruits TBP and BRF2 to the U6 snRNA TATA box. The protein is snRNA-activating protein complex subunit 5 (SNAPC5) of Bos taurus (Bovine).